Consider the following 67-residue polypeptide: Mitotic-spindle organizing protein 1A (67 aa).

This sequence belongs to the MOZART1 family. Part of the gamma-tubulin complex. Interacts with GIP1 and GCP3. In terms of tissue distribution, mostly expressed in siliques and flowers, and, to a lower extent, in leaves, roots and seedlings, with highest levels in young tissues, meristematic cells, and the vasculature.

It is found in the cytoplasm. Its subcellular location is the cytoskeleton. The protein resides in the microtubule organizing center. It localises to the spindle. The protein localises to the nucleus. It is found in the phragmoplast. Its subcellular location is the nucleus envelope. In terms of biological role, required for gamma-tubulin complex recruitment to the microtubule organizing centers (MTOCs). During mitosis, modulates gamma-tubulin complex localization, spindle stability and chromosomal segregation. Necessary for gametophyte development and embryogenesis. The protein is Mitotic-spindle organizing protein 1A (GIP2) of Arabidopsis thaliana (Mouse-ear cress).